The sequence spans 492 residues: Aspartyl/glutamyl-tRNA(Asn/Gln) amidotransferase subunit B (492 aa).

The protein belongs to the GatB/GatE family. GatB subfamily. In terms of assembly, heterotrimer of A, B and C subunits.

It carries out the reaction L-glutamyl-tRNA(Gln) + L-glutamine + ATP + H2O = L-glutaminyl-tRNA(Gln) + L-glutamate + ADP + phosphate + H(+). The enzyme catalyses L-aspartyl-tRNA(Asn) + L-glutamine + ATP + H2O = L-asparaginyl-tRNA(Asn) + L-glutamate + ADP + phosphate + 2 H(+). Its function is as follows. Allows the formation of correctly charged Asn-tRNA(Asn) or Gln-tRNA(Gln) through the transamidation of misacylated Asp-tRNA(Asn) or Glu-tRNA(Gln) in organisms which lack either or both of asparaginyl-tRNA or glutaminyl-tRNA synthetases. The reaction takes place in the presence of glutamine and ATP through an activated phospho-Asp-tRNA(Asn) or phospho-Glu-tRNA(Gln). In Bradyrhizobium sp. (strain BTAi1 / ATCC BAA-1182), this protein is Aspartyl/glutamyl-tRNA(Asn/Gln) amidotransferase subunit B.